The following is a 469-amino-acid chain: Acetyl-CoA decarbonylase/synthase complex subunit beta 1 (469 aa).

4 residues coordinate [Ni-Fe-S] cluster: Cys-189, Cys-192, Cys-278, and Cys-280.

It belongs to the CdhC family. As to quaternary structure, monomer. The ACDS complex is made up of alpha, epsilon, beta, gamma and delta chains with a probable stoichiometry of (alpha(2)epsilon(2))(4)-beta(8)-(gamma(1)delta(1))(8) (Potential). It depends on [Ni-Fe-S] cluster as a cofactor.

It carries out the reaction Co(I)-[corrinoid Fe-S protein] + acetyl-CoA + H(+) = methyl-Co(III)-[corrinoid Fe-S protein] + CO + CoA. It functions in the pathway one-carbon metabolism; methanogenesis from acetate. Functionally, part of a complex that catalyzes the reversible cleavage of acetyl-CoA, allowing growth on acetate as sole source of carbon and energy. The alpha-epsilon complex generates CO from CO(2), while the beta subunit (this protein) combines the CO with CoA and a methyl group to form acetyl-CoA. The methyl group, which is incorporated into acetyl-CoA, is transferred to the beta subunit by a corrinoid iron-sulfur protein (the gamma-delta complex). This is Acetyl-CoA decarbonylase/synthase complex subunit beta 1 (cdhC1) from Methanosarcina mazei (strain ATCC BAA-159 / DSM 3647 / Goe1 / Go1 / JCM 11833 / OCM 88) (Methanosarcina frisia).